Consider the following 272-residue polypeptide: 1,4-dihydroxy-2-naphthoyl-CoA synthase (272 aa).

Residues arginine 33, 72–76, tyrosine 84, 116–120, threonine 142, serine 148, tyrosine 245, and lysine 260 contribute to the substrate site; these read SGGDQ and YAIGG. A hydrogencarbonate-binding site is contributed by 141–143; that stretch reads QTG. Over residues 253 to 264 the composition is skewed to basic and acidic residues; it reads GRDAFKEKRDPD. The tract at residues 253-272 is disordered; the sequence is GRDAFKEKRDPDFDQFPKFP.

Belongs to the enoyl-CoA hydratase/isomerase family. MenB subfamily. Hydrogencarbonate is required as a cofactor.

It catalyses the reaction 2-succinylbenzoyl-CoA + H(+) = 1,4-dihydroxy-2-naphthoyl-CoA + H2O. It participates in quinol/quinone metabolism; 1,4-dihydroxy-2-naphthoate biosynthesis; 1,4-dihydroxy-2-naphthoate from chorismate: step 6/7. The protein operates within quinol/quinone metabolism; menaquinone biosynthesis. Its function is as follows. Converts o-succinylbenzoyl-CoA (OSB-CoA) to 1,4-dihydroxy-2-naphthoyl-CoA (DHNA-CoA). This is 1,4-dihydroxy-2-naphthoyl-CoA synthase from Staphylococcus haemolyticus (strain JCSC1435).